The following is a 436-amino-acid chain: 3-ketoacyl-CoA thiolase (436 aa).

The active-site Acyl-thioester intermediate is the Cys-99. Catalysis depends on proton acceptor residues His-392 and Cys-422.

Belongs to the thiolase-like superfamily. Thiolase family. In terms of assembly, heterotetramer of two alpha chains (FadJ) and two beta chains (FadI).

The protein resides in the cytoplasm. It catalyses the reaction an acyl-CoA + acetyl-CoA = a 3-oxoacyl-CoA + CoA. It functions in the pathway lipid metabolism; fatty acid beta-oxidation. Its function is as follows. Catalyzes the final step of fatty acid oxidation in which acetyl-CoA is released and the CoA ester of a fatty acid two carbons shorter is formed. The chain is 3-ketoacyl-CoA thiolase from Escherichia coli (strain SMS-3-5 / SECEC).